The following is a 377-amino-acid chain: MSNPILSWRRVRALCVKETRQIVRDPSSWLIAVVIPLLLLFIFGYGINLDSSKLRVGILLEQRSEAALDFTHTMTGSPYIDATISDNRQELIAKMQAGKIRGLVVIPVDFAEQMERANATAPIQVITDGSEPNTANFVQGYVEGIWQIWQMQRAEDNGQTFEPLIDVQTRYWFNPAAISQHFIIPGAVTIIMTVIGAILTSLVVAREWERGTMEALLSTEITRTELLLCKLIPYYFLGMLAMLLCMLVSVFILGVPYRGSLLILFFISSLFLLSTLGMGLLISTITRNQFNAAQVALNAAFLPSIMLSGFIFQIDSMPAVIRAVTYIIPARYFVSTLQSLFLAGNIPVVLVVNVLFLIASAVMFIGLTWLKTKRRLD.

Residues 1–28 are Cytoplasmic-facing; it reads MSNPILSWRRVRALCVKETRQIVRDPSS. The helical transmembrane segment at 29-49 threads the bilayer; the sequence is WLIAVVIPLLLLFIFGYGINL. The Periplasmic segment spans residues 50-181; the sequence is DSSKLRVGIL…WFNPAAISQH (132 aa). The ABC transmembrane type-2 domain occupies 145–375; that stretch reads IWQIWQMQRA…GLTWLKTKRR (231 aa). The helical transmembrane segment at 182 to 202 threads the bilayer; the sequence is FIIPGAVTIIMTVIGAILTSL. At 203 to 234 the chain is on the cytoplasmic side; that stretch reads VVAREWERGTMEALLSTEITRTELLLCKLIPY. The chain crosses the membrane as a helical span at residues 235-255; that stretch reads YFLGMLAMLLCMLVSVFILGV. The Periplasmic portion of the chain corresponds to 256 to 261; that stretch reads PYRGSL. A helical transmembrane segment spans residues 262 to 282; sequence LILFFISSLFLLSTLGMGLLI. The Cytoplasmic portion of the chain corresponds to 283-291; the sequence is STITRNQFN. A helical transmembrane segment spans residues 292-312; that stretch reads AAQVALNAAFLPSIMLSGFIF. Over 313–345 the chain is Periplasmic; it reads QIDSMPAVIRAVTYIIPARYFVSTLQSLFLAGN. The chain crosses the membrane as a helical span at residues 346–366; that stretch reads IPVVLVVNVLFLIASAVMFIG. The Cytoplasmic portion of the chain corresponds to 367–377; the sequence is LTWLKTKRRLD.

It belongs to the ABC-2 integral membrane protein family. As to quaternary structure, the complex is probably composed of two ATP-binding proteins (YbhF) and two transmembrane proteins (YbhR and YbhS).

The protein localises to the cell inner membrane. Part of the ABC transporter complex YbhFSR that could be involved in efflux of cefoperazone. Probably involved in the translocation of the substrate across the membrane. This is Probable multidrug ABC transporter permease YbhS (ybhS) from Escherichia coli O157:H7.